Consider the following 272-residue polypeptide: Phosphoglycolate phosphatase (272 aa).

Asp19 (nucleophile) is an active-site residue. Residues Asp19, Asp21, and Asp182 each contribute to the Mg(2+) site.

Belongs to the HAD-like hydrolase superfamily. CbbY/CbbZ/Gph/YieH family. Mg(2+) serves as cofactor.

The enzyme catalyses 2-phosphoglycolate + H2O = glycolate + phosphate. It participates in organic acid metabolism; glycolate biosynthesis; glycolate from 2-phosphoglycolate: step 1/1. Functionally, specifically catalyzes the dephosphorylation of 2-phosphoglycolate. Is involved in the dissimilation of the intracellular 2-phosphoglycolate formed during the DNA repair of 3'-phosphoglycolate ends, a major class of DNA lesions induced by oxidative stress. This Pseudomonas putida (strain ATCC 47054 / DSM 6125 / CFBP 8728 / NCIMB 11950 / KT2440) protein is Phosphoglycolate phosphatase.